A 368-amino-acid polypeptide reads, in one-letter code: tRNA-specific 2-thiouridylase MnmA (368 aa).

ATP-binding positions include 11-18 and methionine 37; that span reads GMSGGVDS. The interval 97-99 is interaction with target base in tRNA; the sequence is NPD. The active-site Nucleophile is the cysteine 102. An intrachain disulfide couples cysteine 102 to cysteine 199. Glycine 127 serves as a coordination point for ATP. The interaction with tRNA stretch occupies residues 149–151; sequence KDQ. Cysteine 199 (cysteine persulfide intermediate) is an active-site residue. Positions 311 to 312 are interaction with tRNA; it reads RY.

The protein belongs to the MnmA/TRMU family. Interacts with TusE.

It is found in the cytoplasm. The catalysed reaction is S-sulfanyl-L-cysteinyl-[protein] + uridine(34) in tRNA + AH2 + ATP = 2-thiouridine(34) in tRNA + L-cysteinyl-[protein] + A + AMP + diphosphate + H(+). Functionally, catalyzes the 2-thiolation of uridine at the wobble position (U34) of tRNA(Lys), tRNA(Glu) and tRNA(Gln), leading to the formation of s(2)U34, the first step of tRNA-mnm(5)s(2)U34 synthesis. Sulfur is provided by IscS, via a sulfur-relay system. Binds ATP and its substrate tRNAs. The polypeptide is tRNA-specific 2-thiouridylase MnmA (Klebsiella pneumoniae (strain 342)).